We begin with the raw amino-acid sequence, 105 residues long: Probable non-functional immunoglobulin lambda variable 5-48 (105 aa).

An N-terminal signal peptide occupies residues 1 to 19 (MAWTPLLLLFLSHCTGSLS). The interval 20 to 44 (QAVLTQPTSLSASPGASARLTCTLR) is framework-1. The region spanning 20 to 105 (QAVLTQPTSL…NAGILFISGL (86 aa)) is the Ig-like domain. The interval 45–53 (SGISVGSYR) is complementarity-determining-1. The tract at residues 54-70 (IYWYQQKPGSPPRYLLN) is framework-2. The complementarity-determining-2 stretch occupies residues 71–77 (YYSDSDK). Residues 78 to 105 (HQGSGVPSRFSGSKDASTNAGILFISGL) form a framework-3 region.

Immunoglobulins are composed of two identical heavy chains and two identical light chains; disulfide-linked.

It is found in the secreted. The protein resides in the cell membrane. Functionally, probable non-functional open reading frame (ORF) of V region of the variable domain of immunoglobulin light chains. Non-functional ORF generally cannot participate in the synthesis of a productive immunoglobulin chain due to altered V-(D)-J or switch recombination and/or splicing site (at mRNA level) and/or conserved amino acid change (protein level). Immunoglobulins, also known as antibodies, are membrane-bound or secreted glycoproteins produced by B lymphocytes. In the recognition phase of humoral immunity, the membrane-bound immunoglobulins serve as receptors which, upon binding of a specific antigen, trigger the clonal expansion and differentiation of B lymphocytes into immunoglobulins-secreting plasma cells. Secreted immunoglobulins mediate the effector phase of humoral immunity, which results in the elimination of bound antigens. The antigen binding site is formed by the variable domain of one heavy chain, together with that of its associated light chain. Thus, each immunoglobulin has two antigen binding sites with remarkable affinity for a particular antigen. The variable domains are assembled by a process called V-(D)-J rearrangement and can then be subjected to somatic hypermutations which, after exposure to antigen and selection, allow affinity maturation for a particular antigen. This is Probable non-functional immunoglobulin lambda variable 5-48 from Homo sapiens (Human).